The primary structure comprises 405 residues: MTTKRIDRDLPSSDDPSSAKRRIEFPEETLENDGAAAIKLLSLLLQCAEYVATDHLREASTLLSEISEICSPFGSSPERVVAYFAQALQTRVISSYLSGACSPLSEKPLTVVQSQKIFSALQTYNSVSPLIKFSHFTANQAIFQALDGEDSVHIIDLDVMQGLQWPALFHILASRPRKLRSIRITGFGSSSDLLASTGRRLADFASSLNLPFEFHPIEGIIGNLIDPSQLATRQGEAVVVHWMQHRLYDVTGNNLETLEILRRLKPNLITVVEQELSYDDGGSFLGRFVEALHYYSALFDALGDGLGEESGERFTVEQIVLGTEIRNIVAHGGGRRKRMKWKEELSRVGFRPVSLRGNPATQAGLLLGMLPWNGYTLVEENGTLRLGWKDLSLLTASAWKSQPFD.

The tract at residues M1–K20 is disordered. The GRAS domain occupies E31–K400. Positions I38–S102 are leucine repeat I (LRI). The LxCxE motif motif lies at L45–E49. The tract at residues L121 to G186 is VHIID. A VHIID motif is present at residues V152 to D156. The segment at S196–S228 is leucine repeat II (LRII). The tract at residues V238–N327 is PFYRE. Residues A330–K400 are SAW.

Belongs to the GRAS family. Interacts with SHR. Expressed in seedlings, cotyledons, shoot apex, leaves and flowers.

It is found in the nucleus. Its function is as follows. Probable transcription factor involved in plant development. This chain is Scarecrow-like protein 23 (SCL23), found in Arabidopsis thaliana (Mouse-ear cress).